Here is a 195-residue protein sequence, read N- to C-terminus: Probable nicotinate-nucleotide adenylyltransferase (195 aa).

It belongs to the NadD family.

The catalysed reaction is nicotinate beta-D-ribonucleotide + ATP + H(+) = deamido-NAD(+) + diphosphate. It participates in cofactor biosynthesis; NAD(+) biosynthesis; deamido-NAD(+) from nicotinate D-ribonucleotide: step 1/1. In terms of biological role, catalyzes the reversible adenylation of nicotinate mononucleotide (NaMN) to nicotinic acid adenine dinucleotide (NaAD). This is Probable nicotinate-nucleotide adenylyltransferase from Chlorobaculum parvum (strain DSM 263 / NCIMB 8327) (Chlorobium vibrioforme subsp. thiosulfatophilum).